The sequence spans 133 residues: Ribosome-binding factor A (133 aa).

It belongs to the RbfA family. In terms of assembly, monomer. Binds 30S ribosomal subunits, but not 50S ribosomal subunits or 70S ribosomes.

The protein resides in the cytoplasm. Its function is as follows. One of several proteins that assist in the late maturation steps of the functional core of the 30S ribosomal subunit. Associates with free 30S ribosomal subunits (but not with 30S subunits that are part of 70S ribosomes or polysomes). Required for efficient processing of 16S rRNA. May interact with the 5'-terminal helix region of 16S rRNA. This is Ribosome-binding factor A from Acinetobacter baumannii (strain ACICU).